The chain runs to 434 residues: DNA primase large subunit PriL (434 aa).

[4Fe-4S] cluster contacts are provided by cysteine 281, cysteine 392, cysteine 403, and cysteine 409.

This sequence belongs to the eukaryotic-type primase large subunit family. In terms of assembly, heterodimer of a small subunit (PriS) and a large subunit (PriL). Requires [4Fe-4S] cluster as cofactor.

Functionally, regulatory subunit of DNA primase, an RNA polymerase that catalyzes the synthesis of short RNA molecules used as primers for DNA polymerase during DNA replication. Stabilizes and modulates the activity of the small subunit, increasing the rate of DNA synthesis, and conferring RNA synthesis capability. The DNA polymerase activity may enable DNA primase to also catalyze primer extension after primer synthesis. May also play a role in DNA repair. This chain is DNA primase large subunit PriL, found in Methanothermobacter thermautotrophicus (strain ATCC 29096 / DSM 1053 / JCM 10044 / NBRC 100330 / Delta H) (Methanobacterium thermoautotrophicum).